We begin with the raw amino-acid sequence, 349 residues long: tRNA-specific 2-thiouridylase MnmA (349 aa).

Residues 7 to 14 and L33 contribute to the ATP site; that span reads GLSGGVDS. C94 functions as the Nucleophile in the catalytic mechanism. A disulfide bridge connects residues C94 and C193. G119 lines the ATP pocket. Residues 143–145 form an interaction with tRNA region; that stretch reads KDQ. C193 acts as the Cysteine persulfide intermediate in catalysis. Residues 298–299 are interaction with tRNA; the sequence is RY.

It belongs to the MnmA/TRMU family.

The protein localises to the cytoplasm. It catalyses the reaction S-sulfanyl-L-cysteinyl-[protein] + uridine(34) in tRNA + AH2 + ATP = 2-thiouridine(34) in tRNA + L-cysteinyl-[protein] + A + AMP + diphosphate + H(+). In terms of biological role, catalyzes the 2-thiolation of uridine at the wobble position (U34) of tRNA, leading to the formation of s(2)U34. In Gloeothece citriformis (strain PCC 7424) (Cyanothece sp. (strain PCC 7424)), this protein is tRNA-specific 2-thiouridylase MnmA.